We begin with the raw amino-acid sequence, 195 residues long: Holliday junction branch migration complex subunit RuvA (195 aa).

Positions 1 to 62 (MIEFVKGPVA…EDQQTLYGFR (62 aa)) are domain I. The domain II stretch occupies residues 63–141 (SRRERELFNK…ELAPDYVPNE (79 aa)). The segment at 141–145 (EGLFA) is flexible linker. The segment at 146–195 (QGASELDEACEALVALGYSEREIAKVRKALSGEILTTDAYIKRALQLLLK) is domain III.

It belongs to the RuvA family. As to quaternary structure, homotetramer. Forms an RuvA(8)-RuvB(12)-Holliday junction (HJ) complex. HJ DNA is sandwiched between 2 RuvA tetramers; dsDNA enters through RuvA and exits via RuvB. An RuvB hexamer assembles on each DNA strand where it exits the tetramer. Each RuvB hexamer is contacted by two RuvA subunits (via domain III) on 2 adjacent RuvB subunits; this complex drives branch migration. In the full resolvosome a probable DNA-RuvA(4)-RuvB(12)-RuvC(2) complex forms which resolves the HJ.

It is found in the cytoplasm. Its function is as follows. The RuvA-RuvB-RuvC complex processes Holliday junction (HJ) DNA during genetic recombination and DNA repair, while the RuvA-RuvB complex plays an important role in the rescue of blocked DNA replication forks via replication fork reversal (RFR). RuvA specifically binds to HJ cruciform DNA, conferring on it an open structure. The RuvB hexamer acts as an ATP-dependent pump, pulling dsDNA into and through the RuvAB complex. HJ branch migration allows RuvC to scan DNA until it finds its consensus sequence, where it cleaves and resolves the cruciform DNA. This is Holliday junction branch migration complex subunit RuvA from Exiguobacterium sp. (strain ATCC BAA-1283 / AT1b).